The chain runs to 285 residues: Octanoyltransferase (285 aa).

Positions 50–277 (LRTPDELWIV…NIAQRHAGDI (228 aa)) constitute a BPL/LPL catalytic domain. Residues 89-96 (RGGQVTWH), 189-191 (SLG), and 202-204 (GIA) contribute to the substrate site. C220 serves as the catalytic Acyl-thioester intermediate.

The protein belongs to the LipB family.

Its subcellular location is the cytoplasm. It carries out the reaction octanoyl-[ACP] + L-lysyl-[protein] = N(6)-octanoyl-L-lysyl-[protein] + holo-[ACP] + H(+). Its pathway is protein modification; protein lipoylation via endogenous pathway; protein N(6)-(lipoyl)lysine from octanoyl-[acyl-carrier-protein]: step 1/2. Catalyzes the transfer of endogenously produced octanoic acid from octanoyl-acyl-carrier-protein onto the lipoyl domains of lipoate-dependent enzymes. Lipoyl-ACP can also act as a substrate although octanoyl-ACP is likely to be the physiological substrate. The protein is Octanoyltransferase of Psychrobacter cryohalolentis (strain ATCC BAA-1226 / DSM 17306 / VKM B-2378 / K5).